Reading from the N-terminus, the 354-residue chain is Putative [LysW]-L-2-aminoadipate/[LysW]-L-glutamate phosphate reductase (354 aa).

Residues 10–13 (SGVI) and 34–36 (SRR) contribute to the NADP(+) site. Cysteine 153 is an active-site residue. Asparagine 321 contacts NADP(+).

Belongs to the NAGSA dehydrogenase family. Type 1 subfamily. LysY sub-subfamily.

The protein localises to the cytoplasm. It carries out the reaction [amino-group carrier protein]-C-terminal-N-(1-carboxy-5-oxopentan-1-yl)-L-glutamine + phosphate + NADP(+) = [amino-group carrier protein]-C-terminal-N-(1-carboxy-5-phosphooxy-5-oxopentan-1-yl)-L-glutamine + NADPH + H(+). The catalysed reaction is [amino-group carrier protein]-C-terminal-gamma-(L-glutamyl-5-semialdehyde)-L-glutamate + phosphate + NADP(+) = [amino-group carrier protein]-C-terminal-gamma-(5-phospho-L-glutamyl)-L-glutamate + NADPH + H(+). Its pathway is amino-acid biosynthesis; L-lysine biosynthesis via AAA pathway; L-lysine from L-alpha-aminoadipate (Thermus route): step 3/5. It participates in amino-acid biosynthesis; L-arginine biosynthesis. Functionally, involved in both the arginine and lysine biosynthetic pathways. The polypeptide is Putative [LysW]-L-2-aminoadipate/[LysW]-L-glutamate phosphate reductase (Caldivirga maquilingensis (strain ATCC 700844 / DSM 13496 / JCM 10307 / IC-167)).